Here is a 365-residue protein sequence, read N- to C-terminus: UDP-N-acetylglucosamine--N-acetylmuramyl-(pentapeptide) pyrophosphoryl-undecaprenol N-acetylglucosamine transferase (365 aa).

UDP-N-acetyl-alpha-D-glucosamine contacts are provided by residues 12–14, Asn-128, Arg-169, Ser-195, and Gln-296; that span reads TGG.

It belongs to the glycosyltransferase 28 family. MurG subfamily.

The protein resides in the cell inner membrane. It catalyses the reaction di-trans,octa-cis-undecaprenyl diphospho-N-acetyl-alpha-D-muramoyl-L-alanyl-D-glutamyl-meso-2,6-diaminopimeloyl-D-alanyl-D-alanine + UDP-N-acetyl-alpha-D-glucosamine = di-trans,octa-cis-undecaprenyl diphospho-[N-acetyl-alpha-D-glucosaminyl-(1-&gt;4)]-N-acetyl-alpha-D-muramoyl-L-alanyl-D-glutamyl-meso-2,6-diaminopimeloyl-D-alanyl-D-alanine + UDP + H(+). It functions in the pathway cell wall biogenesis; peptidoglycan biosynthesis. Functionally, cell wall formation. Catalyzes the transfer of a GlcNAc subunit on undecaprenyl-pyrophosphoryl-MurNAc-pentapeptide (lipid intermediate I) to form undecaprenyl-pyrophosphoryl-MurNAc-(pentapeptide)GlcNAc (lipid intermediate II). In Gluconobacter oxydans (strain 621H) (Gluconobacter suboxydans), this protein is UDP-N-acetylglucosamine--N-acetylmuramyl-(pentapeptide) pyrophosphoryl-undecaprenol N-acetylglucosamine transferase.